Consider the following 447-residue polypeptide: MREIVHLQTGQCGNQIGAKFWEVVSDEHGIATDGQYKGNTDLQLERISVYYNEVAANKYVPRAVLIDLEPGTMDSVRSGAFGSLFRPDNFVFGQSGAGNNWAKGHYTEGAELVDSVLDVVRKEAEGCDCLQGFQITHSLGGGTGAGMGTLLISKIREEFPDRMMATFSVVPSPKVSDTVVEPYNATLSVHQLVENSDETFCIDNEALYDICFRTLKLATPTYGDLNHLVSIVMSGITTCLRFPGQLNSDLRKLAVNMVPFPRLHFFMVGFAPLTARGSQQYRAITVPELTSQMFDAKNMMAASDPRHGRYLTVAAYFRGKVSMKEVEENMLSVQNKNSNYFVEWIPNNVQTAHCDIAPRAHKMSVTFIGNSTAIQDLFKRVADQFTAMFRRKAFLHWYTGEGMDEMEFTEAESNMQDLVAEYQQYQEAHMDDEEAEEAYEDEAPPEE.

8 residues coordinate GTP: Gln11, Glu69, Ser138, Gly142, Thr143, Gly144, Asn204, and Asn226. Glu69 contributes to the Mg(2+) binding site. The disordered stretch occupies residues 427 to 447; it reads EAHMDDEEAEEAYEDEAPPEE. Acidic residues predominate over residues 430–447; that stretch reads MDDEEAEEAYEDEAPPEE.

This sequence belongs to the tubulin family. Dimer of alpha and beta chains. A typical microtubule is a hollow water-filled tube with an outer diameter of 25 nm and an inner diameter of 15 nM. Alpha-beta heterodimers associate head-to-tail to form protofilaments running lengthwise along the microtubule wall with the beta-tubulin subunit facing the microtubule plus end conferring a structural polarity. Microtubules usually have 13 protofilaments but different protofilament numbers can be found in some organisms and specialized cells. It depends on Mg(2+) as a cofactor.

The protein resides in the cytoplasm. Its subcellular location is the cytoskeleton. In terms of biological role, tubulin is the major constituent of microtubules, a cylinder consisting of laterally associated linear protofilaments composed of alpha- and beta-tubulin heterodimers. Microtubules grow by the addition of GTP-tubulin dimers to the microtubule end, where a stabilizing cap forms. Below the cap, tubulin dimers are in GDP-bound state, owing to GTPase activity of alpha-tubulin. The chain is Tubulin beta chain (TBB1) from Uromyces fabae (Rust fungus).